A 228-amino-acid chain; its full sequence is ATP synthase subunit a (228 aa).

Helical transmembrane passes span 14–34 (YFLL…WLFF), 71–91 (WVPI…LGLL), 101–121 (ISLT…LGFY), 139–159 (FLLP…PIAL), 165–185 (ANLT…WVLM), and 188–208 (VAIA…EIGV).

It belongs to the ATPase A chain family. F-type ATPases have 2 components, CF(1) - the catalytic core - and CF(0) - the membrane proton channel. CF(1) has five subunits: alpha(3), beta(3), gamma(1), delta(1), epsilon(1). CF(0) has three main subunits: a, b and c.

The protein localises to the mitochondrion inner membrane. Functionally, mitochondrial membrane ATP synthase (F(1)F(0) ATP synthase or Complex V) produces ATP from ADP in the presence of a proton gradient across the membrane which is generated by electron transport complexes of the respiratory chain. F-type ATPases consist of two structural domains, F(1) - containing the extramembraneous catalytic core and F(0) - containing the membrane proton channel, linked together by a central stalk and a peripheral stalk. During catalysis, ATP synthesis in the catalytic domain of F(1) is coupled via a rotary mechanism of the central stalk subunits to proton translocation. Key component of the proton channel; it may play a direct role in the translocation of protons across the membrane. The polypeptide is ATP synthase subunit a (ATP6) (Pisaster ochraceus (Ochre sea star)).